The primary structure comprises 187 residues: Aminodeoxychorismate synthase component 2 (187 aa).

Residues 1 to 187 (MILLIDNYDS…HQLLANFLHR (187 aa)) enclose the Glutamine amidotransferase type-1 domain. Catalysis depends on residues Cys79, His168, and Glu170.

Monomer. Heterodimer consisting of two non-identical subunits: a glutamine amidotransferase subunit (PabA) and a aminodeoxychorismate synthase subunit (PabB).

It catalyses the reaction chorismate + L-glutamine = 4-amino-4-deoxychorismate + L-glutamate. It participates in cofactor biosynthesis; tetrahydrofolate biosynthesis; 4-aminobenzoate from chorismate: step 1/2. With respect to regulation, inhibited by 6-diazo-5-oxo-L-norleucine (DON). The inhibition is competitive with glutamine, but uncompetitive with chorismate. Functionally, part of a heterodimeric complex that catalyzes the two-step biosynthesis of 4-amino-4-deoxychorismate (ADC), a precursor of p-aminobenzoate (PABA) and tetrahydrofolate. In the first step, a glutamine amidotransferase (PabA) generates ammonia as a substrate that, along with chorismate, is used in the second step, catalyzed by aminodeoxychorismate synthase (PabB) to produce ADC. PabA converts glutamine into glutamate only in the presence of stoichiometric amounts of PabB. In Escherichia coli (strain K12), this protein is Aminodeoxychorismate synthase component 2.